A 338-amino-acid polypeptide reads, in one-letter code: Phenylalanine--tRNA ligase alpha subunit (338 aa).

Glu-252 provides a ligand contact to Mg(2+).

This sequence belongs to the class-II aminoacyl-tRNA synthetase family. Phe-tRNA synthetase alpha subunit type 1 subfamily. In terms of assembly, tetramer of two alpha and two beta subunits. It depends on Mg(2+) as a cofactor.

Its subcellular location is the cytoplasm. It carries out the reaction tRNA(Phe) + L-phenylalanine + ATP = L-phenylalanyl-tRNA(Phe) + AMP + diphosphate + H(+). The polypeptide is Phenylalanine--tRNA ligase alpha subunit (Pseudomonas paraeruginosa (strain DSM 24068 / PA7) (Pseudomonas aeruginosa (strain PA7))).